Here is a 145-residue protein sequence, read N- to C-terminus: Peptide methionine sulfoxide reductase MsrB (145 aa).

Residues 4-127 (SDELKQRIGD…NSAALKFIPY (124 aa)) enclose the MsrB domain. C116 (nucleophile) is an active-site residue.

The protein belongs to the MsrB Met sulfoxide reductase family.

The catalysed reaction is L-methionyl-[protein] + [thioredoxin]-disulfide + H2O = L-methionyl-(R)-S-oxide-[protein] + [thioredoxin]-dithiol. The chain is Peptide methionine sulfoxide reductase MsrB from Streptococcus pyogenes serotype M1.